The chain runs to 274 residues: Membrane protein insertase YidC 2 (274 aa).

The first 20 residues, 1 to 20 (MKKKLKLTSLLGLSLLIMTA), serve as a signal peptide directing secretion. Cysteine 21 carries N-palmitoyl cysteine lipidation. Cysteine 21 carries the S-diacylglycerol cysteine lipid modification. 4 helical membrane-spanning segments follow: residues 56-76 (ISIGVGIILFTVLIRTVLLPV), 128-148 (SDSLWPILIQMPVILALFQAL), 167-187 (VDTTLVLPILAAVFTFLSTWL), and 205-225 (GIPVLIFIFAVYAPGGVALYW).

Belongs to the OXA1/ALB3/YidC family. Type 2 subfamily.

It is found in the cell membrane. Functionally, required for the insertion and/or proper folding and/or complex formation of integral membrane proteins into the membrane. Involved in integration of membrane proteins that insert both dependently and independently of the Sec translocase complex, as well as at least some lipoproteins. The polypeptide is Membrane protein insertase YidC 2 (Streptococcus pneumoniae serotype 4 (strain ATCC BAA-334 / TIGR4)).